Here is a 100-residue protein sequence, read N- to C-terminus: Urease subunit gamma (100 aa).

This sequence belongs to the urease gamma subunit family. As to quaternary structure, heterotrimer of UreA (gamma), UreB (beta) and UreC (alpha) subunits. Three heterotrimers associate to form the active enzyme.

The protein resides in the cytoplasm. The enzyme catalyses urea + 2 H2O + H(+) = hydrogencarbonate + 2 NH4(+). The protein operates within nitrogen metabolism; urea degradation; CO(2) and NH(3) from urea (urease route): step 1/1. The sequence is that of Urease subunit gamma from Frankia alni (strain DSM 45986 / CECT 9034 / ACN14a).